The primary structure comprises 30 residues: Large ribosomal subunit protein bL25 (30 aa).

The protein belongs to the bacterial ribosomal protein bL25 family. Part of the 50S ribosomal subunit; part of the 5S rRNA/L5/L18/L25 subcomplex. Contacts the 5S rRNA. Binds to the 5S rRNA independently of L5 and L18.

In terms of biological role, this is one of the proteins that binds to the 5S RNA in the ribosome where it forms part of the central protuberance. This Anabaena variabilis protein is Large ribosomal subunit protein bL25 (rplY).